The primary structure comprises 444 residues: Ribosomal protein uS12 methylthiotransferase RimO (444 aa).

The 117-residue stretch at 4-120 (KSAALVSLGC…LKSFIRDHEA (117 aa)) folds into the MTTase N-terminal domain. Residues cysteine 13, cysteine 49, cysteine 83, cysteine 157, cysteine 161, and cysteine 164 each coordinate [4Fe-4S] cluster. The Radical SAM core domain occupies 143 to 371 (VEGRSSAYVK…LELQRGISRR (229 aa)). A TRAM domain is found at 374 to 442 (ESLVGRVLPV…DYDVEAELLS (69 aa)).

It belongs to the methylthiotransferase family. RimO subfamily. [4Fe-4S] cluster is required as a cofactor.

The protein localises to the cytoplasm. It carries out the reaction L-aspartate(89)-[ribosomal protein uS12]-hydrogen + (sulfur carrier)-SH + AH2 + 2 S-adenosyl-L-methionine = 3-methylsulfanyl-L-aspartate(89)-[ribosomal protein uS12]-hydrogen + (sulfur carrier)-H + 5'-deoxyadenosine + L-methionine + A + S-adenosyl-L-homocysteine + 2 H(+). Catalyzes the methylthiolation of an aspartic acid residue of ribosomal protein uS12. This Syntrophobacter fumaroxidans (strain DSM 10017 / MPOB) protein is Ribosomal protein uS12 methylthiotransferase RimO.